We begin with the raw amino-acid sequence, 357 residues long: MGNRSAADADGLLAGRGPGTGGGAGSPGAAAALVGGVLLIGAVLAGNALVCVSVAAERALQTPTNYFIVSLAAADLLLALLVLPLFVYSEVQGGVWQFSPGLCDALMAMDVMLCTASIFNLCAISADRFVAVAVPLSYNRQSGGGRQLLLIGATWLLSAAVAAPVLCGLNDARGRDPAVCRLEDRDYVVYSSVCSFFLPCPVMLLLYWATFRGLRRWEAARRTKLHGRRPRRPSGPGPPPPEAVETPEAPEAIPTPDATLAEPALPASEERRAKITGRERKAMRVLPVVVGAFLVCWTPFFVVHITGALCPACAVPPRLVSAVTWLGYVNSALNPLIYTVFNAEFRAVFRKALRLCC.

Over 1-32 (MGNRSAADADGLLAGRGPGTGGGAGSPGAAAA) the chain is Extracellular. The N-linked (GlcNAc...) asparagine glycan is linked to Asn-3. Residues 33 to 55 (LVGGVLLIGAVLAGNALVCVSVA) traverse the membrane as a helical segment. Topologically, residues 56–65 (AERALQTPTN) are cytoplasmic. Residues 66 to 88 (YFIVSLAAADLLLALLVLPLFVY) traverse the membrane as a helical segment. Residue Asp-75 coordinates Na(+). Residues 89–104 (SEVQGGVWQFSPGLCD) lie on the Extracellular side of the membrane. The cysteines at positions 103 and 180 are disulfide-linked. Residues 105 to 126 (ALMAMDVMLCTASIFNLCAISA) traverse the membrane as a helical segment. Residue Ser-117 participates in Na(+) binding. The Cytoplasmic segment spans residues 127 to 146 (DRFVAVAVPLSYNRQSGGGR). The helical transmembrane segment at 147-170 (QLLLIGATWLLSAAVAAPVLCGLN) threads the bilayer. At 171 to 186 (DARGRDPAVCRLEDRD) the chain is on the extracellular side. Residues 187–208 (YVVYSSVCSFFLPCPVMLLLYW) traverse the membrane as a helical segment. The Cytoplasmic portion of the chain corresponds to 209-284 (ATFRGLRRWE…ITGRERKAMR (76 aa)). The disordered stretch occupies residues 225–261 (LHGRRPRRPSGPGPPPPEAVETPEAPEAIPTPDATLA). Residues 233 to 242 (PSGPGPPPPE) are compositionally biased toward pro residues. Positions 243 to 259 (AVETPEAPEAIPTPDAT) are enriched in low complexity. A helical membrane pass occupies residues 285–307 (VLPVVVGAFLVCWTPFFVVHITG). Topologically, residues 308-316 (ALCPACAVP) are extracellular. Cys-310 and Cys-313 are disulfide-bonded. A helical membrane pass occupies residues 317–339 (PRLVSAVTWLGYVNSALNPLIYT). The Cytoplasmic segment spans residues 340–357 (VFNAEFRAVFRKALRLCC). Cys-357 is lipidated: S-palmitoyl cysteine.

This sequence belongs to the G-protein coupled receptor 1 family. Forms homo- and heterooligomers with DRD2. D4.7 allele exhibits higher affinity for homodimers compared to DRD2 heterodimers, while alleles D42. and 4.4 have similar affinities for both. The interaction with DRD2 may modulate agonist-induced downstream signaling. Interacts with CLIC6. Interacts with GPRASP1. May interact with ADORA2A. Interacts with KLHL12. In terms of processing, polyubiquitinated by the BCR(KLHL12) E3 ubiquitin ligase complex: polyubiquitination does not lead to degradation of DRD4 protein. Palmitoylated. Palmitoylation of the C-terminal Cys is important for normal expression at the cell membrane.

The protein localises to the cell membrane. In terms of biological role, dopamine receptor responsible for neuronal signaling in the mesolimbic system of the brain, an area of the brain that regulates emotion and complex behavior. Activated by dopamine, but also by epinephrine and norepinephrine, and by numerous synthetic agonists and drugs. Agonist binding triggers signaling via G proteins that inhibit adenylyl cyclase. Modulates the circadian rhythm of contrast sensitivity by regulating the rhythmic expression of NPAS2 in the retinal ganglion cells. This Mustela putorius furo (European domestic ferret) protein is D(4) dopamine receptor (DRD4).